A 304-amino-acid chain; its full sequence is Release factor glutamine methyltransferase (304 aa).

Positions 144 and 188 each coordinate S-adenosyl-L-methionine. 188-191 provides a ligand contact to substrate; sequence NPPY.

This sequence belongs to the protein N5-glutamine methyltransferase family. PrmC subfamily.

The catalysed reaction is L-glutaminyl-[peptide chain release factor] + S-adenosyl-L-methionine = N(5)-methyl-L-glutaminyl-[peptide chain release factor] + S-adenosyl-L-homocysteine + H(+). In terms of biological role, methylates the class 1 translation termination release factors RF1/PrfA and RF2/PrfB on the glutamine residue of the universally conserved GGQ motif. The sequence is that of Release factor glutamine methyltransferase from Mycobacterium tuberculosis (strain CDC 1551 / Oshkosh).